A 680-amino-acid polypeptide reads, in one-letter code: Protein terminal ear1 homolog (680 aa).

The RRM domain maps to 223-295; the sequence is SLVVLNSLPA…RRLVVEYTRP (73 aa). 2 disordered regions span residues 294-415 and 593-680; these read RPSL…SWRG and TEPV…GYTD. Composition is skewed to low complexity over residues 328–340 and 379–403; these read PSQSAQPSSSGSG and SAAAACSTAASASSSTATAPSKQSQ. Gly residues predominate over residues 404–413; sequence KGGGGRGGSW. Low complexity-rich tracts occupy residues 602–621 and 634–648; these read SPAPSSASGASSPPKSCAAS and SSSGDGASSASSSNA. Basic and acidic residues predominate over residues 656-666; that stretch reads HGETGGDRGDD.

Highly expressed in shoot apex and inflorescence apex, at intermediate levels in roots and at low levels in leaf blade and leaf sheath.

In terms of biological role, probable RNA-binding protein. Involved in the regular timing (plastochron) of lateral organs formation. May regulate the rate of leaf initiation and the duration of vegetative phase. Seems to be redundant to the function of PLASTOCHRON1, but to act in an independent pathway. This is Protein terminal ear1 homolog (PLA2) from Oryza sativa subsp. indica (Rice).